Consider the following 660-residue polypeptide: Bifunctional polymyxin resistance protein ArnA (660 aa).

The tract at residues 1–304 (MKTVVFAYHD…TLGLVQGSRL (304 aa)) is formyltransferase ArnAFT. 86–88 (HLI) serves as a coordination point for (6R)-10-formyltetrahydrofolate. Histidine 104 acts as the Proton donor; for formyltransferase activity in catalysis. Residues arginine 114 and 136 to 140 (VKRAD) contribute to the (6R)-10-formyltetrahydrofolate site. The dehydrogenase ArnADH stretch occupies residues 314–660 (RRTRVLILGV…RTVDLTDKPS (347 aa)). NAD(+) contacts are provided by residues aspartate 347 and 368–369 (DI). UDP-alpha-D-glucuronate is bound by residues alanine 393, tyrosine 398, and 432–433 (TS). Glutamate 434 (proton acceptor; for decarboxylase activity) is an active-site residue. Residues arginine 460, asparagine 492, 526–535 (KLIDGGKQKR), and tyrosine 613 each bind UDP-alpha-D-glucuronate. Arginine 619 functions as the Proton donor; for decarboxylase activity in the catalytic mechanism.

The protein in the N-terminal section; belongs to the Fmt family. UDP-L-Ara4N formyltransferase subfamily. In the C-terminal section; belongs to the NAD(P)-dependent epimerase/dehydratase family. UDP-glucuronic acid decarboxylase subfamily. In terms of assembly, homohexamer, formed by a dimer of trimers.

The catalysed reaction is UDP-alpha-D-glucuronate + NAD(+) = UDP-beta-L-threo-pentopyranos-4-ulose + CO2 + NADH. It carries out the reaction UDP-4-amino-4-deoxy-beta-L-arabinose + (6R)-10-formyltetrahydrofolate = UDP-4-deoxy-4-formamido-beta-L-arabinose + (6S)-5,6,7,8-tetrahydrofolate + H(+). It functions in the pathway nucleotide-sugar biosynthesis; UDP-4-deoxy-4-formamido-beta-L-arabinose biosynthesis; UDP-4-deoxy-4-formamido-beta-L-arabinose from UDP-alpha-D-glucuronate: step 1/3. Its pathway is nucleotide-sugar biosynthesis; UDP-4-deoxy-4-formamido-beta-L-arabinose biosynthesis; UDP-4-deoxy-4-formamido-beta-L-arabinose from UDP-alpha-D-glucuronate: step 3/3. The protein operates within bacterial outer membrane biogenesis; lipopolysaccharide biosynthesis. Bifunctional enzyme that catalyzes the oxidative decarboxylation of UDP-glucuronic acid (UDP-GlcUA) to UDP-4-keto-arabinose (UDP-Ara4O) and the addition of a formyl group to UDP-4-amino-4-deoxy-L-arabinose (UDP-L-Ara4N) to form UDP-L-4-formamido-arabinose (UDP-L-Ara4FN). The modified arabinose is attached to lipid A and is required for resistance to polymyxin and cationic antimicrobial peptides. The protein is Bifunctional polymyxin resistance protein ArnA of Escherichia coli O9:H4 (strain HS).